We begin with the raw amino-acid sequence, 122 residues long: Secreted RxLR effector protein RXLR-C251 (122 aa).

Positions 1 to 24 (MRFFYKLALMTTVASLACSDTALA) are cleaved as a signal peptide. Positions 48–51 (RSLR) match the RxLR motif.

It belongs to the RxLR effector family.

Its subcellular location is the secreted. The protein resides in the host cytoplasm. The protein localises to the host nucleus. Functionally, secreted effector that does not suppress pattern-triggered immunity (PTI) in plant host. The chain is Secreted RxLR effector protein RXLR-C251 from Plasmopara halstedii (Downy mildew of sunflower).